A 159-amino-acid chain; its full sequence is Vesicle transport protein SFT2A (159 aa).

Residues 1–36 (MEKLRRVLSGQDDEEQGLTAQVLDASSLSFNTRLKW) lie on the Cytoplasmic side of the membrane. Serine 9 is subject to Phosphoserine. The chain crosses the membrane as a helical span at residues 37 to 57 (FVICFVAGIFFSFLGTGLLWL). At 58–62 (PNGMK) the chain is on the lumenal side. Residues 63–83 (LFAVFYTLGNLAALASTCFLM) traverse the membrane as a helical segment. Residues 84–97 (GPVKQLKKMFETTR) lie on the Cytoplasmic side of the membrane. Residues 98–118 (LLATIIMLLCLVFTLCAALWW) form a helical membrane-spanning segment. The Lumenal segment spans residues 119-122 (RKKG). A helical transmembrane segment spans residues 123–143 (LALLFCILQFLSMTWYSLSYI). Residues 144–159 (PYARDAVLKCCSSLLG) lie on the Cytoplasmic side of the membrane.

Belongs to the SFT2 family.

It localises to the membrane. In terms of biological role, may be involved in fusion of retrograde transport vesicles derived from an endocytic compartment with the Golgi complex. This is Vesicle transport protein SFT2A from Mus musculus (Mouse).